Consider the following 399-residue polypeptide: Nuclear hormone receptor family member nhr-125 (399 aa).

The nuclear receptor DNA-binding region spans 10-80 (PFSCRICNQK…MGMDTTKFQY (71 aa)). 2 NR C4-type zinc fingers span residues 13-33 (CRIC…CRAC) and 50-63 (CQKG…CKRC). The 244-residue stretch at 149–392 (QLENLTEGFK…EKLQKSQFSI (244 aa)) folds into the NR LBD domain.

This sequence belongs to the nuclear hormone receptor family.

The protein localises to the nucleus. Its function is as follows. Orphan nuclear receptor. The polypeptide is Nuclear hormone receptor family member nhr-125 (nhr-125) (Caenorhabditis elegans).